The following is a 142-amino-acid chain: MQNLNSKILAIDFGTKIIGTAINDINLNLCLPYCEITNNELKFKKILEIVEEENIKEIVIGFPKTQNSYVSERHQLIIDFKNQLSELLKNKNIEICFFDESYSTKSSKESLMNFNVKTSKLKKNKDMIAASIILENYLASKK.

It belongs to the YqgF nuclease family.

The protein localises to the cytoplasm. Its function is as follows. Could be a nuclease involved in processing of the 5'-end of pre-16S rRNA. The chain is Putative pre-16S rRNA nuclease from Malacoplasma penetrans (strain HF-2) (Mycoplasma penetrans).